A 333-amino-acid polypeptide reads, in one-letter code: Tryptophan--tRNA ligase (333 aa).

ATP contacts are provided by residues 11–13 and 19–20; these read QPS and GN. Positions 12-20 match the 'HIGH' region motif; sequence PSGELTIGN. Residue aspartate 135 coordinates L-tryptophan. ATP contacts are provided by residues 147-149, valine 186, and 195-199; these read GED and KMSKS. A 'KMSKS' region motif is present at residues 195–199; the sequence is KMSKS.

This sequence belongs to the class-I aminoacyl-tRNA synthetase family. Homodimer.

Its subcellular location is the cytoplasm. It carries out the reaction tRNA(Trp) + L-tryptophan + ATP = L-tryptophyl-tRNA(Trp) + AMP + diphosphate + H(+). Functionally, catalyzes the attachment of tryptophan to tRNA(Trp). This is Tryptophan--tRNA ligase from Pasteurella multocida (strain Pm70).